The chain runs to 600 residues: DDB1- and CUL4-associated factor 15 (600 aa).

A disordered region spans residues 1–29 (MAPSSKSERNSGAGSAGGGPGGTGGKRAV). Gly residues predominate over residues 14 to 27 (GSAGGGPGGTGGKR). Position 50 is a phosphoserine (Ser-50). 4 residues coordinate Zn(2+): Cys-193, Cys-196, Cys-211, and His-214. Phosphoserine is present on Ser-314. Residues 334-343 (AKGSPLEETR) show a composition bias toward basic and acidic residues. A disordered region spans residues 334–384 (AKGSPLEETRLPSSLGPSSSRCRPSLEPQAPSGEVVPRDSPPAAETTAPEP). Composition is skewed to low complexity over residues 344–359 (LPSSLGPSSSRCRPSL) and 374–384 (PPAAETTAPEP).

In terms of assembly, component of the DCX(DCAF15) complex, also named CLR4(DCAF15) complex, composed of DCAF15, DDB1, cullin-4 (CUL4A or CUL4B), DDA1 and RBX1.

Its pathway is protein modification; protein ubiquitination. In terms of biological role, substrate-recognition component of the DCX(DCAF15) complex, a cullin-4-RING E3 ubiquitin-protein ligase complex that mediates ubiquitination and degradation of target proteins. The DCX(DCAF15) complex acts as a regulator of the natural killer (NK) cells effector functions, possibly by mediating ubiquitination and degradation of cohesin subunits SMC1A and SMC3. May play a role in the activation of antigen-presenting cells (APC) and their interaction with NK cells. This chain is DDB1- and CUL4-associated factor 15, found in Mus musculus (Mouse).